A 361-amino-acid polypeptide reads, in one-letter code: Phospho-N-acetylmuramoyl-pentapeptide-transferase (361 aa).

The next 10 helical transmembrane spans lie at 28-48, 74-94, 99-119, 133-153, 168-188, 203-223, 236-256, 263-283, 288-308, and 338-358; these read LAIIITLSLSFITGPILIEFL, TMGGIMIILSSCLSTLLLADL, IWITLFGFISFGIIGFMDDYA, SKLLLQGIISVIICVLLEYLD, LSLDLGYCYIVFAIFVIVGSS, VPIAFTAGSFALISYLVGNLI, TGELTVLCAGLVGSCLGFLWF, VFMGDTGSLSLGGVLGIISVI, IVLAIVGGLFVIETASVILQV, and KVVIRFWIISVIFALIGLSSL.

The protein belongs to the glycosyltransferase 4 family. MraY subfamily. It depends on Mg(2+) as a cofactor.

It is found in the cell membrane. It catalyses the reaction UDP-N-acetyl-alpha-D-muramoyl-L-alanyl-gamma-D-glutamyl-meso-2,6-diaminopimeloyl-D-alanyl-D-alanine + di-trans,octa-cis-undecaprenyl phosphate = di-trans,octa-cis-undecaprenyl diphospho-N-acetyl-alpha-D-muramoyl-L-alanyl-D-glutamyl-meso-2,6-diaminopimeloyl-D-alanyl-D-alanine + UMP. The protein operates within cell wall biogenesis; peptidoglycan biosynthesis. Its function is as follows. Catalyzes the initial step of the lipid cycle reactions in the biosynthesis of the cell wall peptidoglycan: transfers peptidoglycan precursor phospho-MurNAc-pentapeptide from UDP-MurNAc-pentapeptide onto the lipid carrier undecaprenyl phosphate, yielding undecaprenyl-pyrophosphoryl-MurNAc-pentapeptide, known as lipid I. This is Phospho-N-acetylmuramoyl-pentapeptide-transferase from Rickettsia rickettsii.